Consider the following 205-residue polypeptide: DNA-directed RNA polymerase RPB5 homolog (205 aa).

The protein belongs to the archaeal RpoH/eukaryotic RPB5 RNA polymerase subunit family. Part of the viral DNA-directed RNA polymerase that consists of 8 polII-like subunits (RPB1, RPB2, RPB3, RPB5, RPB6, RPB7, RPB9, RPB10), a capping enzyme and a termination factor.

The protein localises to the host cytoplasm. The protein resides in the virion. Functionally, component of the DNA-directed RNA polymerase (RNAP) that catalyzes the transcription in the cytoplasm of viral DNA into RNA using the four ribonucleoside triphosphates as substrates. The polypeptide is DNA-directed RNA polymerase RPB5 homolog (Ornithodoros (relapsing fever ticks)).